Reading from the N-terminus, the 304-residue chain is Recombination-associated protein RdgC (304 aa).

Belongs to the RdgC family.

It is found in the cytoplasm. The protein localises to the nucleoid. Functionally, may be involved in recombination. The polypeptide is Recombination-associated protein RdgC (Shewanella oneidensis (strain ATCC 700550 / JCM 31522 / CIP 106686 / LMG 19005 / NCIMB 14063 / MR-1)).